We begin with the raw amino-acid sequence, 86 residues long: Small ribosomal subunit protein bS20 (86 aa).

The span at 1 to 22 (MANIKSAKKRAVQSEKRRKHNA) shows a compositional bias: basic residues. The interval 1 to 28 (MANIKSAKKRAVQSEKRRKHNASGRSMM) is disordered.

It belongs to the bacterial ribosomal protein bS20 family.

In terms of biological role, binds directly to 16S ribosomal RNA. The polypeptide is Small ribosomal subunit protein bS20 (Serratia proteamaculans (strain 568)).